Consider the following 485-residue polypeptide: ATP synthase subunit beta (485 aa).

The span at 1-11 (MPATETADKNT) shows a compositional bias: basic and acidic residues. The disordered stretch occupies residues 1–20 (MPATETADKNTKSANSDTSG). 170-177 (GGAGVGKT) lines the ATP pocket.

The protein belongs to the ATPase alpha/beta chains family. F-type ATPases have 2 components, CF(1) - the catalytic core - and CF(0) - the membrane proton channel. CF(1) has five subunits: alpha(3), beta(3), gamma(1), delta(1), epsilon(1). CF(0) has three main subunits: a(1), b(2) and c(9-12). The alpha and beta chains form an alternating ring which encloses part of the gamma chain. CF(1) is attached to CF(0) by a central stalk formed by the gamma and epsilon chains, while a peripheral stalk is formed by the delta and b chains.

It localises to the cell membrane. It catalyses the reaction ATP + H2O + 4 H(+)(in) = ADP + phosphate + 5 H(+)(out). In terms of biological role, produces ATP from ADP in the presence of a proton gradient across the membrane. The catalytic sites are hosted primarily by the beta subunits. This Mycolicibacterium paratuberculosis (strain ATCC BAA-968 / K-10) (Mycobacterium paratuberculosis) protein is ATP synthase subunit beta.